Here is a 150-residue protein sequence, read N- to C-terminus: Large ribosomal subunit protein bL9 (150 aa).

Belongs to the bacterial ribosomal protein bL9 family.

Binds to the 23S rRNA. The protein is Large ribosomal subunit protein bL9 of Shewanella baltica (strain OS155 / ATCC BAA-1091).